A 222-amino-acid chain; its full sequence is MEISINKEKALVVFSGGQDSTTCLFWAKKRYKEVVAVSFDYNQKHKLELECAKDICKKHGVEHHILDMKLLNQLAPNSLTRADMKVDEDAPKDGPPNTFVDGRNLLFLSFAAVFAKQRGINNIITGVSQSDFSGYPDCRDVFIKSLNVTLNLAMDYQFVLITPLMWIDKAETWKLADDLGVLDIVKNETLTCYNGIKGNGCGECPACKLRKNGYVEFKRLYK.

14–24 (FSGGQDSTTCL) provides a ligand contact to ATP. Zn(2+)-binding residues include cysteine 192, cysteine 201, cysteine 204, and cysteine 207.

The protein belongs to the QueC family. Homodimer. Zn(2+) is required as a cofactor.

It carries out the reaction 7-carboxy-7-deazaguanine + NH4(+) + ATP = 7-cyano-7-deazaguanine + ADP + phosphate + H2O + H(+). It functions in the pathway purine metabolism; 7-cyano-7-deazaguanine biosynthesis. Catalyzes the ATP-dependent conversion of 7-carboxy-7-deazaguanine (CDG) to 7-cyano-7-deazaguanine (preQ(0)). The chain is 7-cyano-7-deazaguanine synthase from Clostridium acetobutylicum (strain ATCC 824 / DSM 792 / JCM 1419 / IAM 19013 / LMG 5710 / NBRC 13948 / NRRL B-527 / VKM B-1787 / 2291 / W).